Reading from the N-terminus, the 221-residue chain is Translation initiation factor 6 (221 aa).

The protein belongs to the eIF-6 family.

Functionally, binds to the 50S ribosomal subunit and prevents its association with the 30S ribosomal subunit to form the 70S initiation complex. The polypeptide is Translation initiation factor 6 (Nitrosopumilus maritimus (strain SCM1)).